The following is a 508-amino-acid chain: Photosystem II CP47 reaction center protein (508 aa).

6 consecutive transmembrane segments (helical) span residues 21-36 (SVHI…WAGS), 101-115 (IVFS…IWHW), 140-156 (GIHL…FGAF), 203-218 (IAAG…FHLS), 237-252 (VLSS…AFVV), and 457-472 (SFAL…HGAR).

It belongs to the PsbB/PsbC family. PsbB subfamily. PSII is composed of 1 copy each of membrane proteins PsbA, PsbB, PsbC, PsbD, PsbE, PsbF, PsbH, PsbI, PsbJ, PsbK, PsbL, PsbM, PsbT, PsbX, PsbY, PsbZ, Psb30/Ycf12, at least 3 peripheral proteins of the oxygen-evolving complex and a large number of cofactors. It forms dimeric complexes. It depends on Binds multiple chlorophylls. PSII binds additional chlorophylls, carotenoids and specific lipids. as a cofactor.

The protein resides in the plastid. It is found in the chloroplast thylakoid membrane. In terms of biological role, one of the components of the core complex of photosystem II (PSII). It binds chlorophyll and helps catalyze the primary light-induced photochemical processes of PSII. PSII is a light-driven water:plastoquinone oxidoreductase, using light energy to abstract electrons from H(2)O, generating O(2) and a proton gradient subsequently used for ATP formation. The protein is Photosystem II CP47 reaction center protein of Platanus occidentalis (Sycamore).